The chain runs to 107 residues: Cytochrome c-550 (107 aa).

Heme c-binding residues include C11, C14, H15, and M80.

In terms of processing, binds 1 heme c group covalently per subunit.

This chain is Cytochrome c-550, found in Ancylobacter novellus (Thiobacillus novellus).